A 449-amino-acid polypeptide reads, in one-letter code: MRECISIHVGQAGVQIGNACWELYCLEHGIQPDGQMPSDKTIGGGDDSFNTFFSETGAGKHVPRAVFVDLEPTVIDEVRTGTYRQLFHPEQLISGKEDAANNYARGHYTIGKEIIDLVLDRVRKLADQCTGLQGFLVFHSFGGGTGSGFTSLLMERLSVDYGKKSKLEFSIYPAPQVSTAVVEPYNSILTTHTTLEHSDCAFMVDNEAIYDICRRNLDIERPTYTNLNRLMSQIVSSITASLRFDGALNVDLTEFQTNLVPYPRIHFPLATYAPVISAEKAYHEQLSVAEITNACFEPANQMVKCDPRHGKYMACCLLYRGDVVPKDVNAAIATIKTKRTIQFVDWCPTGFKVGINYQPPTVVPGGDLAKVQRAVCMLSNTTAVAEAWARLDHKFDLMYAKRAFVHWYVGEGMEEGEFSEAREDMAALEKDYEEVGADSAEGDDEGDEY.

Residues 1 to 4 (MREC) carry the MREC motif motif. Gln11 serves as a coordination point for GTP. Lys40 carries the post-translational modification N6-acetyllysine. The GTP site is built by Glu71, Ser140, Gly144, Thr145, Thr179, Asn206, and Asn228. Mg(2+) is bound at residue Glu71. Glu254 is a catalytic residue. Tyr282 is modified (3'-nitrotyrosine). Residues 429–449 (EKDYEEVGADSAEGDDEGDEY) form a disordered region. A compositionally biased stretch (acidic residues) spans 431 to 449 (DYEEVGADSAEGDDEGDEY). Phosphotyrosine is present on Tyr432. Ser439 bears the Phosphoserine mark. 3'-nitrotyrosine is present on Tyr449.

This sequence belongs to the tubulin family. In terms of assembly, dimer of alpha and beta chains. A typical microtubule is a hollow water-filled tube with an outer diameter of 25 nm and an inner diameter of 15 nM. Alpha-beta heterodimers associate head-to-tail to form protofilaments running lengthwise along the microtubule wall with the beta-tubulin subunit facing the microtubule plus end conferring a structural polarity. Microtubules usually have 13 protofilaments but different protofilament numbers can be found in some organisms and specialized cells. The cofactor is Mg(2+). Some glutamate residues at the C-terminus are polyglycylated, resulting in polyglycine chains on the gamma-carboxyl group. Glycylation is mainly limited to tubulin incorporated into axonemes (cilia and flagella) whereas glutamylation is prevalent in neuronal cells, centrioles, axonemes, and the mitotic spindle. Both modifications can coexist on the same protein on adjacent residues, and lowering polyglycylation levels increases polyglutamylation, and reciprocally. Cilia and flagella glycylation is required for their stability and maintenance. Flagella glycylation controls sperm motility. Post-translationally, some glutamate residues at the C-terminus are polyglutamylated, resulting in polyglutamate chains on the gamma-carboxyl group. Polyglutamylation plays a key role in microtubule severing by spastin (SPAST). SPAST preferentially recognizes and acts on microtubules decorated with short polyglutamate tails: severing activity by SPAST increases as the number of glutamates per tubulin rises from one to eight, but decreases beyond this glutamylation threshold. Glutamylation is also involved in cilia motility. In terms of processing, acetylation of alpha chains at Lys-40 is located inside the microtubule lumen. This modification has been correlated with increased microtubule stability, intracellular transport and ciliary assembly. Methylation of alpha chains at Lys-40 is found in mitotic microtubules and is required for normal mitosis and cytokinesis contributing to genomic stability. Post-translationally, nitration of Tyr-449 is irreversible and interferes with normal dynein intracellular distribution. In terms of processing, undergoes a tyrosination/detyrosination cycle, the cyclic removal and re-addition of a C-terminal tyrosine residue by the enzymes tubulin tyrosine carboxypeptidase (MATCAP1, VASH1 or VASH2) and tubulin tyrosine ligase (TTL), respectively. Tyrosination promotes microtubule interaction with CAP-Gly domain-containing proteins such as CLIP1, CLIP2 and DCTN1. Tyrosination regulates the initiation of dynein-dynactin motility via interaction with DCTN1, which brings the dynein-dynactin complex into contact with microtubules. In neurons, tyrosinated tubulins mediate the initiation of retrograde vesicle transport. Post-translationally, detyrosination is involved in metaphase plate congression by guiding chromosomes during mitosis: detyrosination promotes interaction with CENPE, promoting pole-proximal transport of chromosomes toward the equator. Detyrosination increases microtubules-dependent mechanotransduction in dystrophic cardiac and skeletal muscle. In cardiomyocytes, detyrosinated microtubules are required to resist to contractile compression during contraction: detyrosination promotes association with desmin (DES) at force-generating sarcomeres, leading to buckled microtubules and mechanical resistance to contraction.

The protein localises to the cytoplasm. The protein resides in the cytoskeleton. The catalysed reaction is GTP + H2O = GDP + phosphate + H(+). Functionally, tubulin is the major constituent of microtubules, a cylinder consisting of laterally associated linear protofilaments composed of alpha- and beta-tubulin heterodimers. Microtubules grow by the addition of GTP-tubulin dimers to the microtubule end, where a stabilizing cap forms. Below the cap, tubulin dimers are in GDP-bound state, owing to GTPase activity of alpha-tubulin. This Bos taurus (Bovine) protein is Tubulin alpha-1C chain (TUBA1C).